We begin with the raw amino-acid sequence, 401 residues long: DNA damage checkpoint control protein RAD17 (401 aa).

The tract at residues 367 to 393 (KKIKLPSEEENNKNRESEDEENHCKYP) is disordered. Basic and acidic residues predominate over residues 371 to 393 (LPSEEENNKNRESEDEENHCKYP). Position 383 is a phosphoserine (S383).

The protein belongs to the rad1 family. As to quaternary structure, component of the checkpoint clamp complex composed of DDC1, MEC3 and RAD17. The interaction with MEC3 is performed in a RAD17-dependent manner. The checkpoint clamp complex loads onto DNA. Interacts with the DNA polymerase zeta subunit REV7. 2 RAD17 subunits also form a heterotrimer with one MEC3 subunit.

Its subcellular location is the nucleus. In terms of biological role, component of the checkpoint clamp complex involved in the surveillance mechanism that allows the DNA repair pathways to act to restore the integrity of the DNA prior to DNA synthesis or separation of the replicated chromosomes. Associates with sites of DNA damage and modulates the MEC1 signaling pathway and the activation of RAD53 in response to DNA damage at phase G1. The complex also physically regulates DNA polymerase zeta-dependent mutagenesis by controlling the access of polymerase zeta to damaged DNA. Contrary to its human counterpart, the 9-1-1 complex, the checkpoint clamp complex shows no detectable exonuclease activity. This Saccharomyces cerevisiae (strain ATCC 204508 / S288c) (Baker's yeast) protein is DNA damage checkpoint control protein RAD17 (RAD17).